The chain runs to 370 residues: Anhydro-N-acetylmuramic acid kinase (370 aa).

ATP is bound at residue 12–19; that stretch reads GTSLDGVD.

It belongs to the anhydro-N-acetylmuramic acid kinase family.

The enzyme catalyses 1,6-anhydro-N-acetyl-beta-muramate + ATP + H2O = N-acetyl-D-muramate 6-phosphate + ADP + H(+). Its pathway is amino-sugar metabolism; 1,6-anhydro-N-acetylmuramate degradation. It participates in cell wall biogenesis; peptidoglycan recycling. In terms of biological role, catalyzes the specific phosphorylation of 1,6-anhydro-N-acetylmuramic acid (anhMurNAc) with the simultaneous cleavage of the 1,6-anhydro ring, generating MurNAc-6-P. Is required for the utilization of anhMurNAc either imported from the medium or derived from its own cell wall murein, and thus plays a role in cell wall recycling. This chain is Anhydro-N-acetylmuramic acid kinase, found in Pectobacterium carotovorum subsp. carotovorum (strain PC1).